The sequence spans 68 residues: Copper transport protein ATOX1 (68 aa).

Residues M1 to S63 enclose the HMA domain. C12 and C15 together coordinate Cu cation. The residue at position 47 (S47) is a Phosphoserine. K60 is subject to N6-acetyllysine.

Belongs to the ATX1 family. As to quaternary structure, homodimer. Interacts with ATP7B. Interacts with ATP7A. Interacts (via dimer form) with SLC31A1 (via C-terminal domain); this interaction improves ATOX1 stability and controls intracellular Cu(I) levels.

Its function is as follows. Binds and deliver cytosolic copper to the copper ATPase proteins. May be important in cellular antioxidant defense. The chain is Copper transport protein ATOX1 from Mus musculus (Mouse).